Consider the following 318-residue polypeptide: Taste receptor type 2 member 60 (318 aa).

Residues 1-7 (MNGDHMV) lie on the Extracellular side of the membrane. Residues 8–28 (LGSSVTDQKAIILVIILLLLC) traverse the membrane as a helical segment. Over 29 to 40 (LVAIAGNGFITA) the chain is Cytoplasmic. A helical membrane pass occupies residues 41–61 (ALGVEWVLRGTLLPCDKLLVS). At 62 to 88 (LRASRFCLQWVVMGKTIYVLLYPTAFP) the chain is on the extracellular side. Residues 89–109 (YNPVLQFLAFQWDFLNAATLW) form a helical membrane-spanning segment. Residues 110 to 128 (FSSWLSVFYCVKIATFTHP) are Cytoplasmic-facing. The helical transmembrane segment at 129-149 (VFLWLKHKLSEWVPWMFFSSV) threads the bilayer. At 150–183 (GLSSFTTILFFIGNHSIYQNYLRNHLQPWNVTGN) the chain is on the extracellular side. 2 N-linked (GlcNAc...) asparagine glycosylation sites follow: Asn163 and Asn179. Residues 184 to 204 (SIWSYCEKFYLFPVKMITWTM) form a helical membrane-spanning segment. The Cytoplasmic portion of the chain corresponds to 205 to 234 (PTAVFFICMILLITSLGRHMEKALLTTSGF). A helical transmembrane segment spans residues 235 to 255 (REPSVQAHVKALLALLSLAML). Topologically, residues 256-264 (FISYFLSLV) are extracellular. The helical transmembrane segment at 265-285 (LSAAGIFPPLDFKFWVGESVI) threads the bilayer. Topologically, residues 286 to 318 (YLCAGVHPIILLFSNRRLRAVLERCRSSRCRTP) are cytoplasmic.

This sequence belongs to the G-protein coupled receptor T2R family.

It localises to the membrane. Receptor that may play a role in the perception of bitterness and is gustducin-linked. May play a role in sensing the chemical composition of the gastrointestinal content. The activity of this receptor may stimulate alpha gustducin, mediate PLC-beta-2 activation and lead to the gating of TRPM5. The polypeptide is Taste receptor type 2 member 60 (TAS2R60) (Macaca mulatta (Rhesus macaque)).